The primary structure comprises 117 residues: MEAIRQLEKEHMRLDLPDFSSGDSVKVHVKIKEGEKERIQVFEGVVLKRHNGSKSTAATFTVRKTSFGIGVERIFPLHSPSIDRIEVVKRGLVRQSRIYYFRKLTGKAAKIREKRDR.

It belongs to the bacterial ribosomal protein bL19 family.

This protein is located at the 30S-50S ribosomal subunit interface and may play a role in the structure and function of the aminoacyl-tRNA binding site. The polypeptide is Large ribosomal subunit protein bL19 (Desulfosudis oleivorans (strain DSM 6200 / JCM 39069 / Hxd3) (Desulfococcus oleovorans)).